Here is an 883-residue protein sequence, read N- to C-terminus: Kinesin-like protein 5 (883 aa).

The Kinesin motor domain occupies serine 6–isoleucine 390. An ATP-binding site is contributed by glycine 144 to threonine 151. 2 coiled-coil regions span residues arginine 396–serine 435 and leucine 563–phenylalanine 588. Positions valine 755–glutamine 785 are disordered.

The protein belongs to the TRAFAC class myosin-kinesin ATPase superfamily. Kinesin family. Kinesin II subfamily. In terms of assembly, heterodimer with klp6.

The protein resides in the cytoplasm. The protein localises to the cytoskeleton. It is found in the chromosome. Its subcellular location is the centromere. It localises to the kinetochore. The protein resides in the spindle. Functionally, has a role in establishing metaphase during mitosis. Required for chromosome segregation where it generates tension during kinetochore capturing. The sequence is that of Kinesin-like protein 5 (klp5) from Schizosaccharomyces pombe (strain 972 / ATCC 24843) (Fission yeast).